The following is a 411-amino-acid chain: LL-diaminopimelate aminotransferase (411 aa).

Tyrosine 15 and glycine 42 together coordinate substrate. Pyridoxal 5'-phosphate contacts are provided by residues tyrosine 72, alanine 108 to lysine 109, tyrosine 132, asparagine 188, tyrosine 219, and serine 247 to serine 249. 3 residues coordinate substrate: lysine 109, tyrosine 132, and asparagine 188. N6-(pyridoxal phosphate)lysine is present on lysine 250. Pyridoxal 5'-phosphate is bound by residues arginine 258 and asparagine 293. The substrate site is built by asparagine 293 and arginine 389.

It belongs to the class-I pyridoxal-phosphate-dependent aminotransferase family. LL-diaminopimelate aminotransferase subfamily. In terms of assembly, homodimer. Pyridoxal 5'-phosphate serves as cofactor.

The catalysed reaction is (2S,6S)-2,6-diaminopimelate + 2-oxoglutarate = (S)-2,3,4,5-tetrahydrodipicolinate + L-glutamate + H2O + H(+). The protein operates within amino-acid biosynthesis; L-lysine biosynthesis via DAP pathway; LL-2,6-diaminopimelate from (S)-tetrahydrodipicolinate (aminotransferase route): step 1/1. Functionally, involved in the synthesis of meso-diaminopimelate (m-DAP or DL-DAP), required for both lysine and peptidoglycan biosynthesis. Catalyzes the direct conversion of tetrahydrodipicolinate to LL-diaminopimelate. The sequence is that of LL-diaminopimelate aminotransferase from Desulfitobacterium hafniense (strain Y51).